The primary structure comprises 304 residues: Dihydroorotate dehydrogenase B (NAD(+)), catalytic subunit (304 aa).

FMN-binding positions include Ser-21 and 45-46; that span reads KA. Substrate is bound by residues Lys-45 and 69 to 73; that span reads NAIGL. Asn-99 and Asn-127 together coordinate FMN. Position 127 (Asn-127) interacts with substrate. The Nucleophile role is filled by Cys-130. FMN is bound by residues Lys-165 and Ile-191. Residue 192-193 participates in substrate binding; the sequence is NT. FMN-binding positions include Gly-217, 243–244, and 265–266; these read GG and GT.

This sequence belongs to the dihydroorotate dehydrogenase family. Type 1 subfamily. Heterotetramer of 2 PyrK and 2 PyrD type B subunits. The cofactor is FMN.

The protein localises to the cytoplasm. The catalysed reaction is (S)-dihydroorotate + NAD(+) = orotate + NADH + H(+). The protein operates within pyrimidine metabolism; UMP biosynthesis via de novo pathway; orotate from (S)-dihydroorotate (NAD(+) route): step 1/1. Catalyzes the conversion of dihydroorotate to orotate with NAD(+) as electron acceptor. The sequence is that of Dihydroorotate dehydrogenase B (NAD(+)), catalytic subunit (pyrD) from Listeria welshimeri serovar 6b (strain ATCC 35897 / DSM 20650 / CCUG 15529 / CIP 8149 / NCTC 11857 / SLCC 5334 / V8).